The chain runs to 250 residues: uncharacterized protein (250 aa).

A Glycyl lysine isopeptide (Lys-Gly) (interchain with G-Cter in ubiquitin) cross-link involves residue Lys-17. Residues 30-67 form a disordered region; that stretch reads REEDYVATSKDNIHHHPCDWSAKPSQRQNENEQKSTIR.

This is an uncharacterized protein from Saccharomyces cerevisiae (strain ATCC 204508 / S288c) (Baker's yeast).